The primary structure comprises 473 residues: Beta-secretase 1 (473 aa).

A signal peptide spans 1–21 (MAPALPWLLLWVGSGVLPVHG). Residues 22-45 (TQDGIRLPLRSGLAGAPLGLRLPR) constitute a propeptide that is removed on maturation. At 22-429 (TQDGIRLPLR…PQTDESTLMT (408 aa)) the chain is on the extracellular side. The Peptidase A1 domain occupies 72–388 (YYVEMTVGSP…DRARKRIGFA (317 aa)). Residue D90 is part of the active site. Position 123 is an N6-acetyllysine (K123). N-linked (GlcNAc...) asparagine glycans are attached at residues N150, N169, and N195. 3 disulfide bridges follow: C188–C392, C250–C415, and C302–C352. K247, K251, and K257 each carry N6-acetyllysine. The active site involves D261. N6-acetyllysine is present on residues K271, K272, and K279. Residue N326 is glycosylated (N-linked (GlcNAc...) asparagine). The chain crosses the membrane as a helical span at residues 430–450 (IAYVMAAICALFMLPLCLMVC). S-palmitoyl cysteine attachment occurs at residues C446, C450, C454, and C457. At 451–473 (QWRCLRCLRHQHDDFADDISLLK) the chain is on the cytoplasmic side. Positions 451–473 (QWRCLRCLRHQHDDFADDISLLK) are interaction with RTN3. A DXXLL motif is present at residues 468–472 (DISLL). S470 carries the post-translational modification Phosphoserine. K473 participates in a covalent cross-link: Glycyl lysine isopeptide (Lys-Gly) (interchain with G-Cter in ubiquitin).

The protein belongs to the peptidase A1 family. In terms of assembly, monomer. Interacts (via DXXLL motif) with GGA1, GGA2 and GGA3 (via their VHS domain); the interaction highly increases when BACE1 is phosphorylated at Ser-470. Interacts with RTN1; RTN2; RTN3 and RTN4; the interaction leads to inhibition of amyloid precursor protein processing. Interacts with SNX6. Interacts with PCSK9. Interacts with NAT8 and NAT8B. Interacts with BIN1. Interacts (via extracellular domain) with ADAM10 (via extracellular domain). Interacts with SORL1; this interaction may affect binding with APP and hence reduce APP cleavage. Interacts with NRDC AND NRG1. Palmitoylation mediates lipid raft localization. Post-translationally, acetylated in the endoplasmic reticulum at Lys-123, Lys-247, Lys-251, Lys-257, Lys-271, Lys-272, and Lys-279. Acetylation by NAT8 and NAT8B is transient and deacetylation probably occurs in the Golgi. Acetylation regulates the maturation, the transport to the plasma membrane, the stability and the expression of the protein. In terms of processing, ubiquitinated at Lys-473, ubiquitination leads to lysosomal degradation. Monoubiquitinated and 'Lys-63'-linked polyubitinated. Deubiquitnated by USP8; inhibits lysosomal degradation. Phosphorylation at Ser-470 is required for interaction with GGA1 and retrograded transport from endosomal compartments to the trans-Golgi network. Non-phosphorylated BACE1 enters a direct recycling route to the cell surface. Post-translationally, N-Glycosylated. Addition of a bisecting N-acetylglucosamine by MGAT3 blocks lysosomal targeting, further degradation and is required for maintaining stability under stress conditions.

The protein resides in the cell membrane. The protein localises to the golgi apparatus. Its subcellular location is the trans-Golgi network. It localises to the endoplasmic reticulum. It is found in the endosome. The protein resides in the cell surface. The protein localises to the cytoplasmic vesicle membrane. Its subcellular location is the membrane raft. It localises to the lysosome. It is found in the late endosome. The protein resides in the early endosome. The protein localises to the recycling endosome. Its subcellular location is the cell projection. It localises to the axon. It is found in the dendrite. The catalysed reaction is Broad endopeptidase specificity. Cleaves Glu-Val-Asn-Leu-|-Asp-Ala-Glu-Phe in the Swedish variant of Alzheimer's amyloid precursor protein.. With respect to regulation, inhibited by RTN3 and RTN4. In terms of biological role, responsible for the proteolytic processing of the amyloid precursor protein (APP). Cleaves at the N-terminus of the A-beta peptide sequence, between residues 671 and 672 of APP, leads to the generation and extracellular release of beta-cleaved soluble APP, and a corresponding cell-associated C-terminal fragment which is later released by gamma-secretase. Cleaves CHL1. In Cavia porcellus (Guinea pig), this protein is Beta-secretase 1 (BACE1).